We begin with the raw amino-acid sequence, 464 residues long: MTVNSKRIPFGKPMLEAFCMDPEYTNLNSSSCGSWPKVVSKQIRDYWSLLEAQPDLFSEFYQGLVLQEARLGLARLVHAAVSECVLVSNVTTGIFTVLYNQEFEERDVVVTLSTTYGAIDHGITSLAETRSFKTRRVEFELPTTGEKIVSQFETTIAQIRAKGLRPRLAILETIVSIPAVRMPFEDLLRVCQKECIMTLVDGAHSVGQFEVNLQELHPDFFVSDCHKWLFVPRPCAFLYVAERNQHMMRSAIPTSFGFIPKNGNSQLPLWSQMVSANGTASSFETLFAYTATSDNMPHLCIPTALRFRRDVCGGEAAIYEYIKWLAKEGGDKVAEILQTEVLEEPGLGAGADGQMRDCGIVTVRLPLAIATGPSTAPAHVPGGALTEKEVGPAVRYLTKALADRYKTWIPIADCRGWIWARLCAQVYLEVSDFEMAGNALKVICEEILSREMGQEISDSYRWHD.

N6-(pyridoxal phosphate)lysine is present on Lys227.

Belongs to the class-V pyridoxal-phosphate-dependent aminotransferase family. Pyridoxal 5'-phosphate is required as a cofactor.

Its pathway is alkaloid biosynthesis. Functionally, L-cysteine desulfhydrase-like protein; part of the gene cluster that mediates the biosynthesis of loline alkaloids, potent insecticidal agents composed of a pyrrolizidine ring system and an uncommon ether bridge linking carbons 2 and 7. Lolines are structurally differentiated by the various modifications of the L-amino group and include norloline, loline, N-methylloline, N-acetylloline, N-acetylnorloline, and N-formylloline. The first committed step is the condensation of O-acetyl-L-homoserine (derived from L-aspartic acid) and L-proline, probably catalyzed by the gamma-type pyridoxal 5'-phosphate(PLP)-dependent enzyme lolC, to give the diamino diacid, NACPP. Ensuing cyclization, decarboxylation, and acetylation steps yield 1-exo-acetamidopyrrolizidine (AcAP). LolO is required for installation of the ether bridge upon the pathway intermediate, 1-exo-acetamidopyrrolizidine (AcAP). In sequential 2-oxoglutarate- and O(2)-consuming steps, lolO removes hydrogens from C2 and C7 of AcAP to form both carbon-oxygen bonds in N-acetylnorloline (NANL), the precursor to all other lolines. The enzymes lolD, lolE, lolF and lolT have also been proposed to be involved in the ether-bridge installation. Further processing of the exocyclic moiety of NANL by fungal N-acetamidase (LolN), methyltransferase (LolM), and cytochrome P450 (LolP) enzymes, with occasional involvement of a plant acetyltransferase, generates the other known lolines. LolN transforms NANL to norlonine which is monomethylated and dimethylated to respectively lonine and N-methyllonine (NML) by lolM. LolP catalyzes hydroxylation of the methyl group in N-methylloline (NML) and further oxygenation to N-formylloline (NFL). A plant acetyltransferase is responsible for the acetylation of loline to form N-acetylloline (NAL). LolA might interact with aspartate kinase to prevent feedback inhibition of its activity by these end products and thereby promote production of L-homoserine from L-aspartate. In Epichloe uncinata (Endophyte fungus), this protein is L-cysteine desulfhydrase-like protein lolT2.